The sequence spans 256 residues: UstYa family oxidase phomYc (256 aa).

A helical membrane pass occupies residues 38–58 (LVLVLQFVLIISLLASLHILG). Asn-64 and Asn-132 each carry an N-linked (GlcNAc...) asparagine glycan. Residues 158–162 (HQLHC) carry the HXXHC 1 motif. N-linked (GlcNAc...) asparagine glycosylation occurs at Asn-179. The short motif at 193 to 197 (HIDHC) is the HXXHC 2 element.

This sequence belongs to the ustYa family.

The protein localises to the membrane. It functions in the pathway mycotoxin biosynthesis. Its function is as follows. UstYa family oxidase; part of the gene cluster that mediates the biosynthesis of the phomopsins, a group of hexapeptide mycotoxins which infects lupins and causes lupinosis disease in livestock. Within the pathway, phomYc catalyzes the desaturation of the Ile moiety into 2,3-dehydroisoleucine (dIle). The pathway starts with the processing of the precursor phomA by several endopeptidases including kexin proteases as well as the cluster-specific S41 family peptidase phomP1 and the oligopeptidase phomG to produce 10 identical copies of the hexapeptide Tyr-Val-Ile-Pro-Ile-Asp. After being excised from the precursor peptide, the core peptides are cyclized and modified post-translationally by enzymes encoded within the gene cluster. The timing and order of proteolysis of the phomA precursor and PTMs are still unknown. Two tyrosinase-like enzymes, phomQ1 and phomQ2, catalyze the chlorination and hydroxylation of Tyr, respectively. PhomYb, is proposed to be involved in the construction of the macrocyclic structure. The other 4 ustYa family proteins may be involved in PTMs that generate the unique structure of phomopsin A. PhomYa is required for the hydroxylation of C-beta of Tyr. PhomYc, phomYd, and phomYe are responsible for the biosynthesis of 2,3-dehydroisoleucine (dIle), 2,3-dehydroaspartic acid (dAsp), and 3,4-dehydroproline (dPro), respectively. While dIle formation by phomYc is indispensable for the installation of dAsp by phomYd, the order of the other PTMs have not been elucidated yet. Most of the biosynthetic enzymes likely have broad substrate specificity, and thus, there might be a metabolic grid from a precursor to phomopsin A. The enzyme(s) responsible for the biosynthesis of 3,4-dehydrovaline (dVal) have also not been identified yet. Finally, phomM acts as an S-adenosylmethionine-dependent alpha-N-methyltransferase that catalyzes two successive N-methylation reactions, converting N-desmethyl-phomopsin A to phomopsin A and phomopsin A further to an N,N-dimethylated congener called phomopsin E. The sequence is that of UstYa family oxidase phomYc from Diaporthe leptostromiformis (Lupinosis disease fungus).